Consider the following 302-residue polypeptide: tRNA dimethylallyltransferase (302 aa).

Residue 7-14 participates in ATP binding; sequence GPTASGKS. 9-14 is a substrate binding site; it reads TASGKS. Interaction with substrate tRNA stretches follow at residues 32 to 35 and 156 to 160; these read DSMQ and QRILR.

Belongs to the IPP transferase family. Monomer. Mg(2+) is required as a cofactor.

The enzyme catalyses adenosine(37) in tRNA + dimethylallyl diphosphate = N(6)-dimethylallyladenosine(37) in tRNA + diphosphate. In terms of biological role, catalyzes the transfer of a dimethylallyl group onto the adenine at position 37 in tRNAs that read codons beginning with uridine, leading to the formation of N6-(dimethylallyl)adenosine (i(6)A). The sequence is that of tRNA dimethylallyltransferase from Beijerinckia indica subsp. indica (strain ATCC 9039 / DSM 1715 / NCIMB 8712).